A 101-amino-acid chain; its full sequence is uncharacterized protein (101 aa).

An N-terminal signal peptide occupies residues 1 to 21 (MKLSTCCAALLLALASPAVLA). Residues 79–94 (RTTSGNVSAPAQSSQD) show a composition bias toward polar residues. Residues 79 to 101 (RTTSGNVSAPAQSSQDGAPAEPQ) are disordered.

This is an uncharacterized protein from Escherichia coli (strain K12).